We begin with the raw amino-acid sequence, 332 residues long: Lipoyl synthase (332 aa).

7 residues coordinate [4Fe-4S] cluster: cysteine 74, cysteine 79, cysteine 85, cysteine 100, cysteine 104, cysteine 107, and serine 314. The region spanning 85-303 (CFGKGTATFM…EEEAYKMGFT (219 aa)) is the Radical SAM core domain.

It belongs to the radical SAM superfamily. Lipoyl synthase family. Requires [4Fe-4S] cluster as cofactor.

It is found in the cytoplasm. The catalysed reaction is [[Fe-S] cluster scaffold protein carrying a second [4Fe-4S](2+) cluster] + N(6)-octanoyl-L-lysyl-[protein] + 2 oxidized [2Fe-2S]-[ferredoxin] + 2 S-adenosyl-L-methionine + 4 H(+) = [[Fe-S] cluster scaffold protein] + N(6)-[(R)-dihydrolipoyl]-L-lysyl-[protein] + 4 Fe(3+) + 2 hydrogen sulfide + 2 5'-deoxyadenosine + 2 L-methionine + 2 reduced [2Fe-2S]-[ferredoxin]. The protein operates within protein modification; protein lipoylation via endogenous pathway; protein N(6)-(lipoyl)lysine from octanoyl-[acyl-carrier-protein]: step 2/2. In terms of biological role, catalyzes the radical-mediated insertion of two sulfur atoms into the C-6 and C-8 positions of the octanoyl moiety bound to the lipoyl domains of lipoate-dependent enzymes, thereby converting the octanoylated domains into lipoylated derivatives. The protein is Lipoyl synthase of Paracidovorax citrulli (strain AAC00-1) (Acidovorax citrulli).